A 670-amino-acid chain; its full sequence is UvrABC system protein B (670 aa).

A Helicase ATP-binding domain is found at 25–412; it reads EGLEAGLSHQ…AGRVIEQVVR (388 aa). Residue 38 to 45 coordinates ATP; the sequence is GVTGSGKT. Residues 91–114 carry the Beta-hairpin motif; the sequence is YYDYYQPEAYVPSSDTYIEKDSSI. A Helicase C-terminal domain is found at 429-582; it reads QVDDLLSQIR…QIAFNEAHGI (154 aa). Residues 631 to 666 enclose the UVR domain; sequence SKRIRQLEEKMYQLARDLEFEAAAQLRDEIQTLRER.

This sequence belongs to the UvrB family. Forms a heterotetramer with UvrA during the search for lesions. Interacts with UvrC in an incision complex.

It is found in the cytoplasm. In terms of biological role, the UvrABC repair system catalyzes the recognition and processing of DNA lesions. A damage recognition complex composed of 2 UvrA and 2 UvrB subunits scans DNA for abnormalities. Upon binding of the UvrA(2)B(2) complex to a putative damaged site, the DNA wraps around one UvrB monomer. DNA wrap is dependent on ATP binding by UvrB and probably causes local melting of the DNA helix, facilitating insertion of UvrB beta-hairpin between the DNA strands. Then UvrB probes one DNA strand for the presence of a lesion. If a lesion is found the UvrA subunits dissociate and the UvrB-DNA preincision complex is formed. This complex is subsequently bound by UvrC and the second UvrB is released. If no lesion is found, the DNA wraps around the other UvrB subunit that will check the other stand for damage. This is UvrABC system protein B from Pseudomonas aeruginosa (strain ATCC 15692 / DSM 22644 / CIP 104116 / JCM 14847 / LMG 12228 / 1C / PRS 101 / PAO1).